Reading from the N-terminus, the 313-residue chain is Putative stilbene synthase 2 (313 aa).

Cys-88 is a catalytic residue. Residues Leu-191 and 229–231 (GGP) each bind substrate.

This sequence belongs to the thiolase-like superfamily. Chalcone/stilbene synthases family. Homodimer.

The protein localises to the cytoplasm. It carries out the reaction 4-coumaroyl-CoA + 3 malonyl-CoA + 3 H(+) = trans-resveratrol + 4 CO2 + 4 CoA. It participates in phytoalexin biosynthesis; 3,4',5-trihydroxystilbene biosynthesis; 3,4',5-trihydroxystilbene from trans-4-coumarate: step 2/2. This is Putative stilbene synthase 2 from Arachis hypogaea (Peanut).